The primary structure comprises 1105 residues: Tubulin-folding cofactor D (1105 aa).

Asn122 and Asn126 each carry an N-linked (GlcNAc...) asparagine glycan. HEAT repeat units lie at residues 308–345 (IYLE…RLPW), 347–385 (LAEQ…WHGA), 401–446 (SKCL…CYSK), and 452–489 (LQTN…RHAS). N-linked (GlcNAc...) asparagine glycosylation occurs at Asn373. 3 N-linked (GlcNAc...) asparagine glycosylation sites follow: Asn721, Asn883, and Asn1083.

Interacts with alp21.

The protein resides in the cytoplasm. It localises to the cytoskeleton. In terms of biological role, has a function in the folding of beta-tubulin. Microtubule-associated protein that is essential to direct polarized cell growth and to position the nucleus and septum to the center of the cell during mitosis. The sequence is that of Tubulin-folding cofactor D (alp1) from Schizosaccharomyces pombe (strain 972 / ATCC 24843) (Fission yeast).